The sequence spans 603 residues: UPF0313 protein MJ1155 (603 aa).

Residues 285-557 (GIVPVQFSVV…KIQKAICLYR (273 aa)) form the Radical SAM core domain. [4Fe-4S] cluster contacts are provided by C299, C303, and C306.

The protein belongs to the UPF0313 family. [4Fe-4S] cluster serves as cofactor.

This chain is UPF0313 protein MJ1155, found in Methanocaldococcus jannaschii (strain ATCC 43067 / DSM 2661 / JAL-1 / JCM 10045 / NBRC 100440) (Methanococcus jannaschii).